The primary structure comprises 102 residues: NADH-quinone oxidoreductase subunit K 1 (102 aa).

Helical transmembrane passes span 5–25 (LYEV…CVVA), 30–50 (VIMM…TFVG), and 62–82 (VFSL…LAMV).

The protein belongs to the complex I subunit 4L family. NDH-1 is composed of 14 different subunits. Subunits NuoA, H, J, K, L, M, N constitute the membrane sector of the complex.

Its subcellular location is the cell inner membrane. It carries out the reaction a quinone + NADH + 5 H(+)(in) = a quinol + NAD(+) + 4 H(+)(out). In terms of biological role, NDH-1 shuttles electrons from NADH, via FMN and iron-sulfur (Fe-S) centers, to quinones in the respiratory chain. The immediate electron acceptor for the enzyme in this species is believed to be ubiquinone. Couples the redox reaction to proton translocation (for every two electrons transferred, four hydrogen ions are translocated across the cytoplasmic membrane), and thus conserves the redox energy in a proton gradient. This Citrifermentans bemidjiense (strain ATCC BAA-1014 / DSM 16622 / JCM 12645 / Bem) (Geobacter bemidjiensis) protein is NADH-quinone oxidoreductase subunit K 1.